The following is an 814-amino-acid chain: G-type lectin S-receptor-like serine/threonine-protein kinase At1g61400 (814 aa).

The N-terminal stretch at 1 to 34 is a signal peptide; the sequence is MDFLFLLLERKNKHMGKKRVVLLWLSIFISFSSA. The Bulb-type lectin domain maps to 35–154; the sequence is EITEESPLSI…VSGRTLWESF (120 aa). Over 35-436 the chain is Extracellular; it reads EITEESPLSI…ELDVNKRKKT (402 aa). N-linked (GlcNAc...) asparagine glycosylation is found at Asn-63, Asn-104, Asn-127, and Asn-246. The EGF-like; atypical domain occupies 288 to 324; it reads PANSCDIYGVCGPFGFCVISVPPKCKCFKGFIPKSIE. Intrachain disulfides connect Cys-292-Cys-304 and Cys-298-Cys-312. N-linked (GlcNAc...) asparagine glycosylation is found at Asn-330, Asn-346, and Asn-385. The PAN domain maps to 343–425; the sequence is CQGNSTGKDA…GELLSIRLAR (83 aa). 2 cysteine pairs are disulfide-bonded: Cys-378–Cys-399 and Cys-382–Cys-388. The chain crosses the membrane as a helical span at residues 437 to 457; it reads IIAITVSLTLFVILGFTAFGF. The Cytoplasmic segment spans residues 458-814; sequence WRRRVEQNAL…EMTESVIHGR (357 aa). Residues 500-785 form the Protein kinase domain; sequence FSLSNKLGHG…DLPLPKQPTF (286 aa). ATP is bound by residues 506–514 and Lys-528; that span reads LGHGGFGSV. A phosphoserine mark is found at Ser-534 and Ser-549. The tract at residues 589–606 is caM-binding; that stretch reads KKRLEIDWPKRFDIIQGI. The Proton acceptor role is filled by Asp-625. Phosphoserine occurs at positions 629 and 642. Phosphothreonine is present on Thr-659. Residues Ser-702 and Ser-796 each carry the phosphoserine modification.

It belongs to the protein kinase superfamily. Ser/Thr protein kinase family.

The protein localises to the cell membrane. It catalyses the reaction L-seryl-[protein] + ATP = O-phospho-L-seryl-[protein] + ADP + H(+). The enzyme catalyses L-threonyl-[protein] + ATP = O-phospho-L-threonyl-[protein] + ADP + H(+). This is G-type lectin S-receptor-like serine/threonine-protein kinase At1g61400 from Arabidopsis thaliana (Mouse-ear cress).